The sequence spans 1902 residues: Plexin-B3 (1902 aa).

Residues 1 to 34 (MLTDFLQAPVMAPWSPFSLHLLLLFLLLLPLTRA) form the signal peptide. In terms of domain architecture, Sema spans 35–461 (HRFSVPNASF…TAQQVDRILV (427 aa)). At 35-1245 (HRFSVPNASF…MISTFPVEAQ (1211 aa)) the chain is on the extracellular side. Asparagine 41 carries N-linked (GlcNAc...) asparagine glycosylation. Disulfide bonds link cysteine 88-cysteine 97 and cysteine 122-cysteine 130. The N-linked (GlcNAc...) asparagine glycan is linked to asparagine 221. 3 disulfides stabilise this stretch: cysteine 257/cysteine 360, cysteine 273/cysteine 305, and cysteine 323/cysteine 347. The disordered stretch occupies residues 353-372 (DSPESYPCGDEHTPSPIAGR). N-linked (GlcNAc...) asparagine glycans are attached at residues asparagine 416 and asparagine 469. The PSI 1 domain maps to 463–515 (ACPQFPNCTTCLQARDPLCGWCILQGRCTRRAECGRAVQPNQWLWSYEDNHCL). 5 cysteine pairs are disulfide-bonded: cysteine 464–cysteine 481, cysteine 470–cysteine 514, cysteine 473–cysteine 490, cysteine 484–cysteine 496, and cysteine 551–cysteine 569. PSI domains are found at residues 609–671 (DCSA…EACP) and 776–822 (DCAM…QLCP). N-linked (GlcNAc...) asparagine glycosylation is found at asparagine 791, asparagine 889, asparagine 946, asparagine 1090, and asparagine 1207. IPT/TIG domains follow at residues 824-913 (PSID…HFTY), 915-1001 (DPVL…FRYT), and 1003-1134 (NPQL…FLYQ). The helical transmembrane segment at 1246 to 1266 (VGLGMGAAMLIAAVLLLTLMY) threads the bilayer. Topologically, residues 1267–1902 (RHKSKQALRD…ALVEYKVTDL (636 aa)) are cytoplasmic.

Belongs to the plexin family. In terms of assembly, binds MET and MST1R. Interacts with RIT2/RIN. Interacts (via cytoplasmic domain) with FSCN1 and RAC1. May form homodimers (via Sema domain). Interacts (via cytoplasmic domain) with ARHGDIA. In terms of tissue distribution, expressed in glioma cells (at protein level). Expressed in glioma cells and oligodendrocyte precursor cells.

It localises to the cell membrane. Functionally, receptor for SEMA5A that plays a role in axon guidance, invasive growth and cell migration. Stimulates neurite outgrowth and mediates Ca(2+)/Mg(2+)-dependent cell aggregation. In glioma cells, SEMA5A stimulation of PLXNB3 results in the disassembly of F-actin stress fibers, disruption of focal adhesions and cellular collapse as well as inhibition of cell migration and invasion through ARHGDIA-mediated inactivation of RAC1. This is Plexin-B3 (Plxnb3) from Rattus norvegicus (Rat).